The chain runs to 251 residues: Triosephosphate isomerase (251 aa).

9–11 is a binding site for substrate; it reads NWK. The Electrophile role is filled by H94. E167 serves as the catalytic Proton acceptor. Residues G173, S213, and 234–235 each bind substrate; that span reads GG.

Belongs to the triosephosphate isomerase family. In terms of assembly, homodimer.

It is found in the cytoplasm. The enzyme catalyses D-glyceraldehyde 3-phosphate = dihydroxyacetone phosphate. The protein operates within carbohydrate biosynthesis; gluconeogenesis. It participates in carbohydrate degradation; glycolysis; D-glyceraldehyde 3-phosphate from glycerone phosphate: step 1/1. Its function is as follows. Involved in the gluconeogenesis. Catalyzes stereospecifically the conversion of dihydroxyacetone phosphate (DHAP) to D-glyceraldehyde-3-phosphate (G3P). In Finegoldia magna (strain ATCC 29328 / DSM 20472 / WAL 2508) (Peptostreptococcus magnus), this protein is Triosephosphate isomerase.